A 902-amino-acid chain; its full sequence is AP-4 complex accessory subunit RUSC1 (902 aa).

Disordered stretches follow at residues 31-67, 81-155, 189-227, and 247-450; these read ELQE…SNSP, LENR…PGTC, QDVP…KTEP, and KTTE…AQAG. Positions 94 to 112 are enriched in low complexity; the sequence is AASPSDPGCSSSLSSCSDL. Low complexity predominate over residues 249–261; it reads TENNNTGWKNNGN. A compositionally biased stretch (polar residues) spans 277–289; the sequence is WKTNTRITDSGSK. The segment covering 291-309 has biased composition (basic and acidic residues); the sequence is DAGKIDGGWRSDVSEEPVP. Composition is skewed to pro residues over residues 381 to 390 and 398 to 407; these read PAPPVPPRDP and PPRPPPPPVP. Low complexity predominate over residues 433–450; sequence PAAGEEAPAAKEPGAQAG. The segment at 470–605 is interaction with TRAF6; that stretch reads MAEAQSGTGQ…FHAFILGLLN (136 aa). The RUN domain maps to 522–666; it reads DVGHLVLTTL…LTFHLDLLFE (145 aa). An interaction with IKBKG region spans residues 606-672; that stretch reads TKQLELWFSS…LLFEHHHHLP (67 aa). Disordered stretches follow at residues 706–729 and 747–776; these read LRGT…PGSW and GFPL…TDEM. Positions 844–902 constitute an SH3 domain; sequence QTHRAVRALCDHTAARPDQLSFRRGEVLRVITTVDEDWLRCGRDGMEGLVPVGYTSLVL.

As to quaternary structure, associated component of the adapter-like complex 4 (AP-4). Interacts with IKBKG and TRAF6. Interacts with F-actin, acetylated actin, TUBB3, STX1A, KIF5B and KLC1. In terms of processing, phosphorylated on serine residues following nuclear translocation. Polyubiquitinated; polyubiquitination involves TRAF6. In terms of tissue distribution, predominantly expressed in brain.

It is found in the cytoplasm. The protein localises to the nucleus. Its subcellular location is the cytoskeleton. The protein resides in the cytoplasmic vesicle. It localises to the early endosome. It is found in the postsynaptic density. The protein localises to the golgi apparatus. Associates with the adapter-like complex 4 (AP-4) and may therefore play a role in vesicular trafficking of proteins at the trans-Golgi network. Signaling adapter which plays a role in neuronal differentiation. Involved in regulation of NGF-dependent neurite outgrowth. May play a role in neuronal vesicular trafficking, specifically involving pre-synaptic membrane proteins. Seems to be involved in signaling pathways that are regulated by the prolonged activation of MAPK. Can regulate the polyubiquitination of IKBKG and thus may be involved in regulation of the NF-kappa-B pathway. In Homo sapiens (Human), this protein is AP-4 complex accessory subunit RUSC1.